The following is a 178-amino-acid chain: Adenine phosphoribosyltransferase (178 aa).

The protein belongs to the purine/pyrimidine phosphoribosyltransferase family. As to quaternary structure, homodimer.

The protein resides in the cytoplasm. It catalyses the reaction AMP + diphosphate = 5-phospho-alpha-D-ribose 1-diphosphate + adenine. Its pathway is purine metabolism; AMP biosynthesis via salvage pathway; AMP from adenine: step 1/1. Functionally, catalyzes a salvage reaction resulting in the formation of AMP, that is energically less costly than de novo synthesis. The chain is Adenine phosphoribosyltransferase from Mycoplasmoides gallisepticum (strain R(low / passage 15 / clone 2)) (Mycoplasma gallisepticum).